The sequence spans 403 residues: S-adenosylmethionine synthase (403 aa).

140–145 (GKGSTD) is a binding site for ATP.

Belongs to the AdoMet synthase 2 family. Mg(2+) is required as a cofactor.

The enzyme catalyses L-methionine + ATP + H2O = S-adenosyl-L-methionine + phosphate + diphosphate. The protein operates within amino-acid biosynthesis; S-adenosyl-L-methionine biosynthesis; S-adenosyl-L-methionine from L-methionine: step 1/1. Functionally, catalyzes the formation of S-adenosylmethionine from methionine and ATP. The polypeptide is S-adenosylmethionine synthase (Sulfolobus acidocaldarius (strain ATCC 33909 / DSM 639 / JCM 8929 / NBRC 15157 / NCIMB 11770)).